A 393-amino-acid polypeptide reads, in one-letter code: Cytohesin-4 (393 aa).

Positions Ser-13–Ser-56 form a coiled coil. One can recognise an SEC7 domain in the interval Glu-54–Glu-241. A PH domain is found at Asn-259 to Thr-375. Residues Lys-268–Thr-275, Arg-279, Tyr-290, and Arg-300 each bind a 1,2-diacyl-sn-glycero-3-phospho-(1D-myo-inositol-3,4,5-trisphosphate). The tract at residues Arg-386 to Lys-393 is C-terminal autoinhibitory region.

The protein localises to the cell membrane. In terms of biological role, promotes guanine-nucleotide exchange on ARF1 and ARF5. Promotes the activation of ARF factors through replacement of GDP with GTP. In Mus musculus (Mouse), this protein is Cytohesin-4 (Cyth4).